Reading from the N-terminus, the 121-residue chain is Small ribosomal subunit protein uS10 (121 aa).

Residues 1–20 form a disordered region; that stretch reads MTEQKAKSSKTSSEEAKKQK.

It belongs to the universal ribosomal protein uS10 family. Part of the 30S ribosomal subunit.

In terms of biological role, involved in the binding of tRNA to the ribosomes. The sequence is that of Small ribosomal subunit protein uS10 from Mycoplasmoides gallisepticum (strain R(low / passage 15 / clone 2)) (Mycoplasma gallisepticum).